Reading from the N-terminus, the 176-residue chain is Large ribosomal subunit protein bL12m (176 aa).

The protein belongs to the bacterial ribosomal protein bL12 family. As to quaternary structure, component of the mitochondrial large ribosomal subunit (mt-LSU). Mature N.crassa 74S mitochondrial ribosomes consist of a small (37S) and a large (54S) subunit. The 37S small subunit contains a 16S ribosomal RNA (16S mt-rRNA) and 32 different proteins. The 54S large subunit contains a 23S rRNA (23S mt-rRNA) and 42 different proteins.

The protein resides in the mitochondrion. Component of the mitochondrial ribosome (mitoribosome), a dedicated translation machinery responsible for the synthesis of mitochondrial genome-encoded proteins, including at least some of the essential transmembrane subunits of the mitochondrial respiratory chain. The mitoribosomes are attached to the mitochondrial inner membrane and translation products are cotranslationally integrated into the membrane. The sequence is that of Large ribosomal subunit protein bL12m (mrpl12) from Neurospora crassa (strain ATCC 24698 / 74-OR23-1A / CBS 708.71 / DSM 1257 / FGSC 987).